Here is a 464-residue protein sequence, read N- to C-terminus: Glutathione reductase (464 aa).

FAD contacts are provided by serine 17 and glycine 18. Serine 17 contacts glutathione. Arginine 24 contributes to the glutathione binding site. FAD is bound by residues glutamate 37, threonine 45, cysteine 46, and lysine 54. The cysteines at positions 46 and 51 are disulfide-linked. Tyrosine 103 serves as a coordination point for glutathione. Alanine 119 serves as a coordination point for FAD. The NADP(+) site is built by alanine 186, isoleucine 189, glutamate 192, arginine 209, arginine 215, and glycine 274. Aspartate 315 provides a ligand contact to FAD. Glutamate 321 is a binding site for NADP(+). Threonine 323 contributes to the FAD binding site. Residue arginine 331 coordinates glutathione. NADP(+) is bound at residue valine 354. Position 453 (histidine 453) interacts with FAD. The active-site Proton acceptor is the histidine 453.

This sequence belongs to the class-I pyridine nucleotide-disulfide oxidoreductase family. As to quaternary structure, homodimer. FAD is required as a cofactor.

The protein resides in the cytoplasm. Its subcellular location is the mitochondrion. The catalysed reaction is 2 glutathione + NADP(+) = glutathione disulfide + NADPH + H(+). Functionally, catalyzes the reduction of glutathione disulfide (GSSG) to reduced glutathione (GSH). Constitutes the major mechanism to maintain a high GSH:GSSG ratio in the cytosol. In Schizosaccharomyces pombe (strain 972 / ATCC 24843) (Fission yeast), this protein is Glutathione reductase (pgr1).